The chain runs to 596 residues: Actin-histidine N-methyltransferase (596 aa).

The interval Met-1–Pro-22 is disordered. Over residues Gln-10 to Val-20 the composition is skewed to polar residues. Residues Arg-75, Glu-104–Phe-106, Arg-254, Asp-275–His-279, and Ser-325–Phe-327 each bind S-adenosyl-L-methionine. The SET domain maps to Glu-94–Gly-314. The disordered stretch occupies residues Gly-551–Leu-596. Residues Ser-571–Glu-584 show a composition bias toward acidic residues.

It belongs to the class V-like SAM-binding methyltransferase superfamily. SETD3 actin-histidine methyltransferase family. Interacts with MYOD1. Phosphorylated by GSK3B, which is required for recognition by the SCF(FBXW7) complex and subsequent degradation. Post-translationally, ubiquitinated by the SCF(FBXW7) complex following phosphorylation by GSK3B, leading to its degradation by the proteasome.

It is found in the cytoplasm. The protein resides in the nucleus. It carries out the reaction L-histidyl-[protein] + S-adenosyl-L-methionine = N(tele)-methyl-L-histidyl-[protein] + S-adenosyl-L-homocysteine + H(+). In terms of biological role, protein-histidine N-methyltransferase that specifically mediates 3-methylhistidine (tele-methylhistidine) methylation of actin at 'His-73'. Histidine methylation of actin is required for smooth muscle contraction of the laboring uterus during delivery. Does not have protein-lysine N-methyltransferase activity and probably only catalyzes histidine methylation of actin. The chain is Actin-histidine N-methyltransferase from Rattus norvegicus (Rat).